The primary structure comprises 276 residues: Glutamate 5-kinase (276 aa).

Lysine 14 lines the ATP pocket. Substrate is bound by residues serine 54, aspartate 141, and asparagine 157. Residues serine 177 to aspartate 178 and threonine 219 to lysine 225 contribute to the ATP site.

Belongs to the glutamate 5-kinase family.

Its subcellular location is the cytoplasm. It catalyses the reaction L-glutamate + ATP = L-glutamyl 5-phosphate + ADP. Its pathway is amino-acid biosynthesis; L-proline biosynthesis; L-glutamate 5-semialdehyde from L-glutamate: step 1/2. Functionally, catalyzes the transfer of a phosphate group to glutamate to form L-glutamate 5-phosphate. This chain is Glutamate 5-kinase, found in Listeria monocytogenes serotype 4b (strain CLIP80459).